The following is a 59-amino-acid chain: Small EDRK-rich factor 2 (59 aa).

2 stretches are compositionally biased toward basic and acidic residues: residues 1–30 and 50–59; these read MTRGNQRELARQKNMKKQSDSVKGKRRDDG and KANEKKEEPK. The tract at residues 1–59 is disordered; that stretch reads MTRGNQRELARQKNMKKQSDSVKGKRRDDGLSAAARKQRDSEIMQQKQKKANEKKEEPK.

This sequence belongs to the SERF family.

Its function is as follows. Positive regulator of amyloid protein aggregation and proteotoxicity. Induces conformational changes in amyloid proteins, such as HTT, driving them into compact formations preceding the formation of aggregates. The protein is Small EDRK-rich factor 2 (SERF2) of Plecturocebus moloch (Dusky titi monkey).